The sequence spans 520 residues: Peptide chain release factor 3 (520 aa).

Positions 8–277 (ESRKTFAIIS…FAPMPNARQT (270 aa)) constitute a tr-type G domain. Residues 17-24 (SHPDAGKT), 85-89 (DTPGH), and 139-142 (NKLD) each bind GTP.

The protein belongs to the TRAFAC class translation factor GTPase superfamily. Classic translation factor GTPase family. PrfC subfamily.

The protein localises to the cytoplasm. Functionally, increases the formation of ribosomal termination complexes and stimulates activities of RF-1 and RF-2. It binds guanine nucleotides and has strong preference for UGA stop codons. It may interact directly with the ribosome. The stimulation of RF-1 and RF-2 is significantly reduced by GTP and GDP, but not by GMP. This chain is Peptide chain release factor 3, found in Staphylococcus aureus (strain MRSA252).